A 1189-amino-acid polypeptide reads, in one-letter code: Zinc finger CCCH domain-containing protein 6 (1189 aa).

Basic and acidic residues predominate over residues 1-12; the sequence is MTDSEHAGHDRE. The interval 1 to 105 is disordered; the sequence is MTDSEHAGHD…HKKRTGFYRD (105 aa). Residues 13 to 28 are compositionally biased toward acidic residues; the sequence is DGELEDGEIDDAGFEE. Residues 27–73 are a coiled coil; the sequence is EEIQEKEAKENEKQKSEKAYRKSRKKHKKEREKKKSKRRKREKHKHN. A compositionally biased stretch (basic and acidic residues) spans 29–46; the sequence is IQEKEAKENEKQKSEKAY. Basic residues predominate over residues 47-73; sequence RKSRKKHKKEREKKKSKRRKREKHKHN. C3H1-type zinc fingers lie at residues 273–299, 301–328, and 329–352; these read KGKQICKYFLEGRCIKGDQCKFDHDAE, EKRKEICKFYLQGYCTKGENCIYMHNEF, and PCKFYHSGAKCYQGDNCKFSHDDL. The stretch at 353–385 forms a coiled coil; sequence TKETKKLLDKVLNTDEELINEDERELEELRKRG. 5 disordered regions span residues 451-530, 630-659, 676-755, 947-1026, and 1051-1189; these read FYTS…GPQN, PPVVQDSPNHGSGSDGSSTRTGHGPLPVPG, YQED…GNQV, LEQF…PYAP, and PRDH…SPFC. The segment covering 461–478 has biased composition (low complexity); the sequence is QFQGSSPHPQHIYSSGSS. Over residues 505 to 525 the composition is skewed to pro residues; that stretch reads AGPPGLPVPQSPPLPPGPPEI. Residues 639–659 are compositionally biased toward low complexity; the sequence is HGSGSDGSSTRTGHGPLPVPG. Over residues 718 to 741 the composition is skewed to polar residues; it reads KTLQKQTETLRNQQQPSTELSTPT. Over residues 961 to 973 the composition is skewed to basic and acidic residues; sequence GDPRLQKNFDPRL. 2 stretches are compositionally biased toward low complexity: residues 1009–1020 and 1056–1069; these read SGAGTSNSGSGA and SSSTSELATASSGE. Serine 1158 is subject to Phosphoserine. Over residues 1164–1179 the composition is skewed to basic and acidic residues; sequence DPGRETDDKSLKEVFK.

The sequence is that of Zinc finger CCCH domain-containing protein 6 (ZC3H6) from Homo sapiens (Human).